Here is a 211-residue protein sequence, read N- to C-terminus: Large ribosomal subunit protein uL4 (211 aa).

A compositionally biased stretch (polar residues) spans 46-55 (GNHATKTRSM). The segment at 46-89 (GNHATKTRSMVSGGGKKPWSQKGTGRARQGSTRAPHWVGGGTVH) is disordered.

It belongs to the universal ribosomal protein uL4 family. In terms of assembly, part of the 50S ribosomal subunit.

One of the primary rRNA binding proteins, this protein initially binds near the 5'-end of the 23S rRNA. It is important during the early stages of 50S assembly. It makes multiple contacts with different domains of the 23S rRNA in the assembled 50S subunit and ribosome. In terms of biological role, forms part of the polypeptide exit tunnel. In Leptospira interrogans serogroup Icterohaemorrhagiae serovar copenhageni (strain Fiocruz L1-130), this protein is Large ribosomal subunit protein uL4.